The following is a 126-amino-acid chain: E3 ubiquitin-protein ligase PPP1R11 (126 aa).

The interval 1 to 25 is disordered; sequence MAEAGAGLSETVTETTVTVTTEPEN. Position 2 is an N-acetylalanine (Ala-2). The span at 10 to 22 shows a compositional bias: low complexity; sequence ETVTETTVTVTTE. Residues 52–62 form an atypical RING finger domain 1 region; that stretch reads HMGRRSSKCCC. The segment at 70–126 is disordered; the sequence is FGESSTESDEEEEEGCGHTHCVRGHRKGRRRATLGPTPTTPPQPPDPSQPPPGPMQH. 2 positions are modified to phosphoserine: Ser-73 and Ser-74. At Thr-75 the chain carries Phosphothreonine. The residue at position 77 (Ser-77) is a Phosphoserine. The atypical RING finger domain 2 stretch occupies residues 85-94; it reads CGHTHCVRGH. Basic residues predominate over residues 89–101; that stretch reads HCVRGHRKGRRRA. The span at 107–126 shows a compositional bias: pro residues; it reads PTTPPQPPDPSQPPPGPMQH. Thr-109 is modified (phosphothreonine).

Interacts with TLR2 and UBE2D2. Auto-ubiquitinated. As to expression, widely expressed.

The enzyme catalyses S-ubiquitinyl-[E2 ubiquitin-conjugating enzyme]-L-cysteine + [acceptor protein]-L-lysine = [E2 ubiquitin-conjugating enzyme]-L-cysteine + N(6)-ubiquitinyl-[acceptor protein]-L-lysine.. The protein operates within protein modification; protein ubiquitination. Its function is as follows. Atypical E3 ubiquitin-protein ligase which ubiquitinates TLR2 at 'Lys-754' leading to its degradation by the proteasome. Plays a role in regulating inflammatory cytokine release and gram-positive bacterial clearance by functioning, in part, through the ubiquitination and degradation of TLR2. Inhibitor of protein phosphatase 1. The protein is E3 ubiquitin-protein ligase PPP1R11 (PPP1R11) of Homo sapiens (Human).